The sequence spans 116 residues: Ribosome-binding factor A (116 aa).

This sequence belongs to the RbfA family. As to quaternary structure, monomer. Binds 30S ribosomal subunits, but not 50S ribosomal subunits or 70S ribosomes.

It is found in the cytoplasm. Functionally, one of several proteins that assist in the late maturation steps of the functional core of the 30S ribosomal subunit. Associates with free 30S ribosomal subunits (but not with 30S subunits that are part of 70S ribosomes or polysomes). Required for efficient processing of 16S rRNA. May interact with the 5'-terminal helix region of 16S rRNA. The sequence is that of Ribosome-binding factor A from Staphylococcus epidermidis (strain ATCC 35984 / DSM 28319 / BCRC 17069 / CCUG 31568 / BM 3577 / RP62A).